The chain runs to 168 residues: MKMLGEPEFKENILYYSFLNELFLILIRNGFSCSHAKLILDETRKRGLECSGQFEVISNSVEAPEPESLERIAKTLFTPRPHWGRLVAFLAYLAYLQKNSTEKLFWNDHLKKLKQIVKCHIVPWTLGPRDPKPKQRPFDKLPSAFYFLTAAASCLTLLLLYFRTTQTK.

A helical membrane pass occupies residues 143–162 (SAFYFLTAAASCLTLLLLYF).

The protein localises to the host membrane. Suppresses apoptosis in host cell and thus facilitates production of progeny virions. The chain is Putative apoptosis regulator A9 (A9) from Alcelaphine herpesvirus 1 (strain C500) (AlHV-1).